Here is a 98-residue protein sequence, read N- to C-terminus: MSMVYMNIMLAFTMSLIGLLMYRSHLMSSLLCLEGMMLSLFVMASLMILSTHFTLASMMPIILLVFAACEAALGLALLVMISNTYGTDYVQNLNLLQC.

Helical transmembrane passes span 1 to 21 (MSMVYMNIMLAFTMSLIGLLM), 29 to 49 (SLLCLEGMMLSLFVMASLMIL), and 61 to 81 (IILLVFAACEAALGLALLVMI).

The protein belongs to the complex I subunit 4L family. As to quaternary structure, core subunit of respiratory chain NADH dehydrogenase (Complex I) which is composed of 45 different subunits.

It is found in the mitochondrion inner membrane. It catalyses the reaction a ubiquinone + NADH + 5 H(+)(in) = a ubiquinol + NAD(+) + 4 H(+)(out). Functionally, core subunit of the mitochondrial membrane respiratory chain NADH dehydrogenase (Complex I) which catalyzes electron transfer from NADH through the respiratory chain, using ubiquinone as an electron acceptor. Part of the enzyme membrane arm which is embedded in the lipid bilayer and involved in proton translocation. This chain is NADH-ubiquinone oxidoreductase chain 4L (MT-ND4L), found in Vicugna pacos (Alpaca).